The chain runs to 203 residues: Ras-related protein Rab-18 (203 aa).

Residues S20, G23, K24, S25, S26, D37, P38, T43, G69, K126, D128, and A155 each coordinate GTP. The Effector region motif lies at 40–48; that stretch reads QAATIGVDF. 2 S-geranylgeranyl cysteine lipidation sites follow: C201 and C203. The residue at position 203 (C203) is a Cysteine methyl ester.

It belongs to the small GTPase superfamily. Rab family.

It carries out the reaction GTP + H2O = GDP + phosphate + H(+). The small GTPases Rab are key regulators of intracellular membrane trafficking, from the formation of transport vesicles to their fusion with membranes. Rabs cycle between an inactive GDP-bound form and an active GTP-bound form that is able to recruit to membranes different sets of downstream effectors directly responsible for vesicle formation, movement, tethering and fusion. Plays a role in apical endocytosis/recycling. May be implicated in transport between the plasma membrane and early endosomes. Plays a role in the shedding of pathogen spores from intestinal cells. The sequence is that of Ras-related protein Rab-18 (rab-18) from Caenorhabditis elegans.